A 179-amino-acid polypeptide reads, in one-letter code: Large ribosomal subunit protein uL5 (179 aa).

This sequence belongs to the universal ribosomal protein uL5 family. Part of the 50S ribosomal subunit; part of the 5S rRNA/L5/L18/L25 subcomplex. Contacts the 5S rRNA and the P site tRNA. Forms a bridge to the 30S subunit in the 70S ribosome.

This is one of the proteins that bind and probably mediate the attachment of the 5S RNA into the large ribosomal subunit, where it forms part of the central protuberance. In the 70S ribosome it contacts protein S13 of the 30S subunit (bridge B1b), connecting the 2 subunits; this bridge is implicated in subunit movement. Contacts the P site tRNA; the 5S rRNA and some of its associated proteins might help stabilize positioning of ribosome-bound tRNAs. The polypeptide is Large ribosomal subunit protein uL5 (Citrifermentans bemidjiense (strain ATCC BAA-1014 / DSM 16622 / JCM 12645 / Bem) (Geobacter bemidjiensis)).